A 380-amino-acid polypeptide reads, in one-letter code: Gibberellin 20 oxidase 3 (380 aa).

Residues 221–321 (DSDSIFRLNY…RKTFAFFLCP (101 aa)) form the Fe2OG dioxygenase domain. Residues His-246, Asp-248, and His-302 each coordinate Fe cation. Arg-312 is an active-site residue.

It belongs to the iron/ascorbate-dependent oxidoreductase family. GA20OX subfamily. The cofactor is Fe(2+). L-ascorbate serves as cofactor. In terms of tissue distribution, expressed at high level in developing siliques. Detected in seeds, roots, leaves and inflorescences. In seeds, specifically detected at the outer layer of the outer integument.

The enzyme catalyses gibberellin A12 + 2 2-oxoglutarate + 3 O2 + H(+) = gibberellin A9 + 2 succinate + 3 CO2 + 2 H2O. It carries out the reaction gibberellin A12 + 3 2-oxoglutarate + 3 O2 = gibberellin A25 + 3 succinate + 3 CO2 + H2O + H(+). It catalyses the reaction gibberellin A53 + 2 2-oxoglutarate + 3 O2 + H(+) = gibberellin A20 + 2 succinate + 3 CO2 + 2 H2O. The protein operates within plant hormone biosynthesis; gibberellin biosynthesis. Its function is as follows. Key oxidase enzyme in the biosynthesis of gibberellin that catalyzes the conversion of GA12 and GA53 to GA9 and GA20 respectively, via a three-step oxidation at C-20 of the GA skeleton, and GA25 is also formed as a minor product. GA53 is less effectively oxidized than GA12. The polypeptide is Gibberellin 20 oxidase 3 (GA20OX3) (Arabidopsis thaliana (Mouse-ear cress)).